Here is a 217-residue protein sequence, read N- to C-terminus: Transmembrane protein 253 (217 aa).

Transmembrane regions (helical) follow at residues 33–53 (LVLAVSQLWLAVVVVPLAVSV), 62–82 (MATALPLGPGASGLLTGTVTL), 96–116 (MMIFNTFNLILGFIVVVVEVM), and 138–158 (LSAEAFTLGGVLVSVHALFLL). The segment at 187–217 (PGLENGPTVASTGANERVGQREQTRAALLPP) is disordered.

It is found in the membrane. In Homo sapiens (Human), this protein is Transmembrane protein 253 (TMEM253).